The chain runs to 614 residues: Sulfite reductase [NADPH] flavoprotein alpha-component (614 aa).

The Flavodoxin-like domain maps to 79-217 (LTIIFASQTG…AATEWRKQVL (139 aa)). FMN contacts are provided by residues 85 to 90 (SQTGNA), 132 to 135 (STNG), and 168 to 177 (LGDSSYQFFC). One can recognise an FAD-binding FR-type domain in the interval 249–463 (EQPYTASLST…VEHNNNFKLP (215 aa)). FAD-binding positions include Thr-337, Thr-371, 401–404 (RLYS), 419–421 (TVG), Tyr-425, and 434–437 (GGAS). NADP(+)-binding positions include 534-535 (SR), 540-544 (KVYVQ), and Asp-576. Tyr-614 is an FAD binding site.

This sequence belongs to the NADPH-dependent sulphite reductase flavoprotein subunit CysJ family. It in the N-terminal section; belongs to the flavodoxin family. In the C-terminal section; belongs to the flavoprotein pyridine nucleotide cytochrome reductase family. As to quaternary structure, alpha(8)-beta(8). The alpha component is a flavoprotein, the beta component is a hemoprotein. Requires FAD as cofactor. It depends on FMN as a cofactor.

The catalysed reaction is hydrogen sulfide + 3 NADP(+) + 3 H2O = sulfite + 3 NADPH + 4 H(+). It participates in sulfur metabolism; hydrogen sulfide biosynthesis; hydrogen sulfide from sulfite (NADPH route): step 1/1. Its function is as follows. Component of the sulfite reductase complex that catalyzes the 6-electron reduction of sulfite to sulfide. This is one of several activities required for the biosynthesis of L-cysteine from sulfate. The flavoprotein component catalyzes the electron flow from NADPH -&gt; FAD -&gt; FMN to the hemoprotein component. This is Sulfite reductase [NADPH] flavoprotein alpha-component from Vibrio cholerae serotype O1 (strain ATCC 39315 / El Tor Inaba N16961).